Here is a 327-residue protein sequence, read N- to C-terminus: 1-aminocyclopropane-1-carboxylate oxidase 1 (327 aa).

The Fe2OG dioxygenase domain occupies 157–257 (PTFGTKVSNY…RMSIASFYNP (101 aa)). Residues His-181, Asp-183, and His-238 each coordinate Fe cation.

This sequence belongs to the iron/ascorbate-dependent oxidoreductase family. Fe cation serves as cofactor.

The enzyme catalyses 1-aminocyclopropane-1-carboxylate + L-ascorbate + O2 = ethene + L-dehydroascorbate + hydrogen cyanide + CO2 + 2 H2O. It functions in the pathway alkene biosynthesis; ethylene biosynthesis via S-adenosyl-L-methionine; ethylene from S-adenosyl-L-methionine: step 2/2. The sequence is that of 1-aminocyclopropane-1-carboxylate oxidase 1 (ACO1) from Doritaenopsis sp. (Moth orchid).